Consider the following 401-residue polypeptide: Elongation factor Tu (401 aa).

The 202-residue stretch at 10-211 folds into the tr-type G domain; sequence KPHLNVGTIG…ALDTFVPNPK (202 aa). Residues 19–26 form a G1 region; it reads GHVDHGKT. Position 19–26 (19–26) interacts with GTP; it reads GHVDHGKT. T26 contributes to the Mg(2+) binding site. A G2 region spans residues 62-66; the sequence is GITIA. Positions 83–86 are G3; it reads DCPG. GTP contacts are provided by residues 83-87 and 138-141; these read DCPGH and NKAD. Residues 138–141 form a G4 region; it reads NKAD. Residues 179–181 are G5; the sequence is SAV.

It belongs to the TRAFAC class translation factor GTPase superfamily. Classic translation factor GTPase family. EF-Tu/EF-1A subfamily. In terms of assembly, monomer.

Its subcellular location is the cytoplasm. The enzyme catalyses GTP + H2O = GDP + phosphate + H(+). Its function is as follows. GTP hydrolase that promotes the GTP-dependent binding of aminoacyl-tRNA to the A-site of ribosomes during protein biosynthesis. This chain is Elongation factor Tu, found in Leptospira interrogans serogroup Icterohaemorrhagiae serovar copenhageni (strain Fiocruz L1-130).